Reading from the N-terminus, the 398-residue chain is Protein trichome birefringence-like 45 (398 aa).

A helical; Signal-anchor for type II membrane protein membrane pass occupies residues 1–21 (MAAVQCLTFLFLFLLQNATSA). Positions 131-133 (GDS) match the GDS motif motif. A DCXHWCLPGXXDXWN motif motif is present at residues 375-389 (DCSHWCLPGLPDTWN).

Belongs to the PC-esterase family. TBL subfamily.

The protein localises to the membrane. Its function is as follows. May act as a bridging protein that binds pectin and other cell wall polysaccharides. Probably involved in maintaining esterification of pectins. May be involved in the specific O-acetylation of cell wall polymers. The polypeptide is Protein trichome birefringence-like 45 (TBL45) (Arabidopsis thaliana (Mouse-ear cress)).